The following is a 144-amino-acid chain: INO80 complex subunit 5 (144 aa).

The tract at residues Met-1 to Ile-58 is disordered. Over residues Ser-35–Ile-58 the composition is skewed to polar residues.

As to quaternary structure, component of the INO80 chromatin remodeling complex.

It is found in the nucleus. Component of the INO80 complex which remodels chromatin by shifting nucleosomes and is involved in DNA repair. This chain is INO80 complex subunit 5 (iec5), found in Schizosaccharomyces pombe (strain 972 / ATCC 24843) (Fission yeast).